The primary structure comprises 904 residues: Translation initiation factor IF-2 (904 aa).

Disordered stretches follow at residues Arg-134–Val-248 and His-267–Pro-315. Over residues Arg-136–Glu-177 the composition is skewed to basic and acidic residues. Composition is skewed to low complexity over residues Glu-178–Ala-230 and Gly-285–Asn-303. A tr-type G domain is found at Thr-403–Lys-572. The G1 stretch occupies residues Gly-412–Thr-419. GTP is bound at residue Gly-412 to Thr-419. A G2 region spans residues Gly-437–His-441. Residues Asp-458–Gly-461 form a G3 region. GTP-binding positions include Asp-458–His-462 and Asn-512–Asp-515. The G4 stretch occupies residues Asn-512 to Asp-515. The tract at residues Ser-548–Lys-550 is G5.

This sequence belongs to the TRAFAC class translation factor GTPase superfamily. Classic translation factor GTPase family. IF-2 subfamily.

It is found in the cytoplasm. Its function is as follows. One of the essential components for the initiation of protein synthesis. Protects formylmethionyl-tRNA from spontaneous hydrolysis and promotes its binding to the 30S ribosomal subunits. Also involved in the hydrolysis of GTP during the formation of the 70S ribosomal complex. This chain is Translation initiation factor IF-2, found in Xanthomonas oryzae pv. oryzae (strain PXO99A).